A 946-amino-acid chain; its full sequence is Glycine dehydrogenase (decarboxylating) (946 aa).

Lysine 700 is modified (N6-(pyridoxal phosphate)lysine).

Belongs to the GcvP family. In terms of assembly, the glycine cleavage system is composed of four proteins: P, T, L and H. Pyridoxal 5'-phosphate serves as cofactor.

The enzyme catalyses N(6)-[(R)-lipoyl]-L-lysyl-[glycine-cleavage complex H protein] + glycine + H(+) = N(6)-[(R)-S(8)-aminomethyldihydrolipoyl]-L-lysyl-[glycine-cleavage complex H protein] + CO2. In terms of biological role, the glycine cleavage system catalyzes the degradation of glycine. The P protein binds the alpha-amino group of glycine through its pyridoxal phosphate cofactor; CO(2) is released and the remaining methylamine moiety is then transferred to the lipoamide cofactor of the H protein. In Pseudomonas fluorescens (strain SBW25), this protein is Glycine dehydrogenase (decarboxylating).